Reading from the N-terminus, the 244-residue chain is Eukaryotic translation initiation factor 6 (244 aa).

It belongs to the eIF-6 family. As to quaternary structure, monomer. Associates with the 60S ribosomal subunit.

The protein resides in the cytoplasm. It is found in the nucleus. The protein localises to the nucleolus. Functionally, binds to the 60S ribosomal subunit and prevents its association with the 40S ribosomal subunit to form the 80S initiation complex in the cytoplasm. May also be involved in ribosome biogenesis. In Dictyostelium discoideum (Social amoeba), this protein is Eukaryotic translation initiation factor 6 (eif6).